Consider the following 555-residue polypeptide: CTP synthase (555 aa).

Residues 1-267 (MAKYIFVTGG…GNYLTLRLGL (267 aa)) form an amidoligase domain region. Position 13 (Ser-13) interacts with CTP. Residue Ser-13 participates in UTP binding. 14-19 (SVGKGI) serves as a coordination point for ATP. Tyr-54 serves as a coordination point for L-glutamine. Asp-71 is an ATP binding site. The Mg(2+) site is built by Asp-71 and Glu-141. Residues 148–150 (DIE), 188–193 (KTKPTQ), and Lys-224 each bind CTP. UTP is bound by residues 188–193 (KTKPTQ) and Lys-224. Positions 292 to 535 (AIALVGKYVE…IAAAAQTFRE (244 aa)) constitute a Glutamine amidotransferase type-1 domain. Gly-354 serves as a coordination point for L-glutamine. The active-site Nucleophile; for glutamine hydrolysis is Cys-381. L-glutamine-binding positions include 382–385 (LGMQ), Glu-406, and Arg-463. Active-site residues include His-508 and Glu-510.

It belongs to the CTP synthase family. Homotetramer.

The catalysed reaction is UTP + L-glutamine + ATP + H2O = CTP + L-glutamate + ADP + phosphate + 2 H(+). The enzyme catalyses L-glutamine + H2O = L-glutamate + NH4(+). It catalyses the reaction UTP + NH4(+) + ATP = CTP + ADP + phosphate + 2 H(+). It functions in the pathway pyrimidine metabolism; CTP biosynthesis via de novo pathway; CTP from UDP: step 2/2. With respect to regulation, allosterically activated by GTP, when glutamine is the substrate; GTP has no effect on the reaction when ammonia is the substrate. The allosteric effector GTP functions by stabilizing the protein conformation that binds the tetrahedral intermediate(s) formed during glutamine hydrolysis. Inhibited by the product CTP, via allosteric rather than competitive inhibition. Its function is as follows. Catalyzes the ATP-dependent amination of UTP to CTP with either L-glutamine or ammonia as the source of nitrogen. Regulates intracellular CTP levels through interactions with the four ribonucleotide triphosphates. This Roseiflexus castenholzii (strain DSM 13941 / HLO8) protein is CTP synthase.